A 204-amino-acid chain; its full sequence is Thymidylate kinase (204 aa).

11 to 18 (GLDKSGKT) is a binding site for ATP.

This sequence belongs to the thymidylate kinase family.

The catalysed reaction is dTMP + ATP = dTDP + ADP. Its pathway is pyrimidine metabolism; dTTP biosynthesis. In Vaccinia virus (strain Ankara) (VACV), this protein is Thymidylate kinase (TMK).